We begin with the raw amino-acid sequence, 110 residues long: MIQVLLVTICLAVFPYQVSSKTLKSGSVNEYEVVNPGTVTGLPKGAVKQPEKKHEPMKGNTLQKLPLCTTGPCCRQCKLKPAGTTCWRTSVSSHYCTGRSCECPSYPGNG.

The first 20 residues, 1–20 (MIQVLLVTICLAVFPYQVSS), serve as a signal peptide directing secretion. Positions 21–67 (KTLKSGSVNEYEVVNPGTVTGLPKGAVKQPEKKHEPMKGNTLQKLPL) are excised as a propeptide. In terms of domain architecture, Disintegrin spans 27-110 (SVNEYEVVNP…CECPSYPGNG (84 aa)). Intrachain disulfides connect Cys-68/Cys-77, Cys-73/Cys-96, Cys-74/Cys-101, and Cys-86/Cys-103. The Cell attachment site; atypical (RTS) motif lies at 88–90 (RTS).

This sequence belongs to the disintegrin family. Short disintegrin subfamily. Monomer. Post-translationally, two conformers are found, they may differ by their disulfide bond connectivities. Conformer 2 is 33 times less active than conformer 1. Conformer 2 may represent a non-native protein. The C-terminal dipeptide may be post-translationally removed, as seen in disintegrins that possess a KTS integrin-binding motif. As to expression, expressed by the venom gland.

Its subcellular location is the secreted. In terms of biological role, recombinant protein inhibits the adhesion of alpha-1/beta-1-K562 (ITGA1/ITGB1) cells to collagen IV with an IC(50) of 80 nM. In Protobothrops jerdonii (Jerdon's pitviper), this protein is Disintegrin jerdostatin.